We begin with the raw amino-acid sequence, 711 residues long: Myb-like protein B (711 aa).

A compositionally biased stretch (low complexity) spans 24–50; that stretch reads QPQQSIQQQQQQQQQQQQQQQQQQQQQ. Disordered regions lie at residues 24–70 and 113–235; these read QPQQ…SPQL and NYHT…IINN. Composition is skewed to polar residues over residues 113-139 and 148-157; these read NYHT…SPPT and TPLSSSTGFS. Low complexity-rich tracts occupy residues 158–187 and 198–235; these read NNNN…NNNI and NNYP…IINN. HTH myb-type domains are found at residues 428-490 and 491-542; these read RESI…SPEI and KKGS…SRQT. DNA-binding regions (H-T-H motif) lie at residues 462 to 486 and 514 to 538; these read WKKI…KRVL and WKNV…KAIM. The Myb-like domain maps to 540 to 598; that stretch reads RQTEWNQLEDDILTKKIKLMTQNNEKISFQQVSKHLARAKTTKIPRTALECKSRWSQLN. A disordered region spans residues 598-640; sequence NSTNVNNNNNNNNNSITTSSSNTNQQQQSTMVTPTSSPLSSPI.

The protein localises to the nucleus. Transcriptional activator that initiates multicellular development by induction of adenylyl cyclase expression. The protein is Myb-like protein B (mybB) of Dictyostelium discoideum (Social amoeba).